The primary structure comprises 213 residues: Vacuolar ATPase assembly integral membrane protein vph2 (213 aa).

The next 2 helical transmembrane spans lie at 113–133 (ISAI…VWYC) and 142–162 (KIAL…FLYV).

The protein localises to the endoplasmic reticulum membrane. Functionally, required for vacuolar ATPase assembly. This chain is Vacuolar ATPase assembly integral membrane protein vph2 (vph2), found in Schizosaccharomyces pombe (strain 972 / ATCC 24843) (Fission yeast).